A 350-amino-acid chain; its full sequence is Inner membrane protein YhiM (350 aa).

Residues 1–2 are Cytoplasmic-facing; it reads MN. Residues 3-23 traverse the membrane as a helical segment; that stretch reads IYIGWLFKLIPLIMGLICIAL. Over 24–41 the chain is Periplasmic; sequence GGFVLESSGQSEYFVAGH. The chain crosses the membrane as a helical span at residues 42–62; sequence VLISLAAICLALFTTAFIIIS. The Cytoplasmic portion of the chain corresponds to 63 to 74; it reads QLTRGVNTFYNT. The helical transmembrane segment at 75–95 threads the bilayer; that stretch reads LFPIIGYAGSIITMIWGWALL. Over 96–104 the chain is Periplasmic; the sequence is AGNDVMADE. A helical transmembrane segment spans residues 105-125; sequence FVAGHVIFGVGMIAACVSTVA. Topologically, residues 126-157 are cytoplasmic; that stretch reads ASSGHFLLIPKNAAGSKSDGTPVQAYSSLIGN. The chain crosses the membrane as a helical span at residues 158–178; the sequence is CLIAVPVLLTLLGFIWSITLL. Over 179–190 the chain is Periplasmic; sequence RSADITPHYVAG. The helical transmembrane segment at 191–211 threads the bilayer; it reads HVLLGLTAICACLIGLVATIV. Residues 212-225 are Cytoplasmic-facing; sequence HQTRNTFSTKEHWL. Residues 226 to 246 form a helical membrane-spanning segment; sequence WCYWVIFLGSITVLQGIYVLV. Over 247–257 the chain is Periplasmic; it reads SSDASARLAPG. Residues 258–278 traverse the membrane as a helical segment; that stretch reads IILICLGMICYSIFSKVWLLA. At 279–290 the chain is on the cytoplasmic side; the sequence is LVWRRTCSLANR. Residues 291-311 form a helical membrane-spanning segment; that stretch reads IPMIPVFTCLFCLFLASFLAE. The Periplasmic portion of the chain corresponds to 312-324; it reads MAQTDMGYFIPSR. Residues 325 to 345 traverse the membrane as a helical segment; the sequence is VLVGLGAVCFTLFSIVSILEA. Residues 346-350 lie on the Cytoplasmic side of the membrane; the sequence is GSAKK.

Its subcellular location is the cell inner membrane. This chain is Inner membrane protein YhiM (yhiM), found in Escherichia coli (strain K12).